Here is a 297-residue protein sequence, read N- to C-terminus: tRNA-cytidine(32) 2-sulfurtransferase (297 aa).

The short motif at 45-50 (SGGKDS) is the PP-loop motif element. [4Fe-4S] cluster is bound by residues Cys120, Cys123, and Cys211.

The protein belongs to the TtcA family. In terms of assembly, homodimer. It depends on Mg(2+) as a cofactor. The cofactor is [4Fe-4S] cluster.

The protein localises to the cytoplasm. The enzyme catalyses cytidine(32) in tRNA + S-sulfanyl-L-cysteinyl-[cysteine desulfurase] + AH2 + ATP = 2-thiocytidine(32) in tRNA + L-cysteinyl-[cysteine desulfurase] + A + AMP + diphosphate + H(+). It functions in the pathway tRNA modification. Catalyzes the ATP-dependent 2-thiolation of cytidine in position 32 of tRNA, to form 2-thiocytidine (s(2)C32). The sulfur atoms are provided by the cysteine/cysteine desulfurase (IscS) system. The chain is tRNA-cytidine(32) 2-sulfurtransferase from Vibrio parahaemolyticus serotype O3:K6 (strain RIMD 2210633).